The chain runs to 527 residues: Peptide chain release factor 3 (527 aa).

The tr-type G domain maps to 9-277 (AKRRTFAIIS…AVVDWAPRPL (269 aa)). GTP contacts are provided by residues 18–25 (SHPDAGKT), 86–90 (DTPGH), and 140–143 (NKLD).

Belongs to the TRAFAC class translation factor GTPase superfamily. Classic translation factor GTPase family. PrfC subfamily.

The protein localises to the cytoplasm. In terms of biological role, increases the formation of ribosomal termination complexes and stimulates activities of RF-1 and RF-2. It binds guanine nucleotides and has strong preference for UGA stop codons. It may interact directly with the ribosome. The stimulation of RF-1 and RF-2 is significantly reduced by GTP and GDP, but not by GMP. The protein is Peptide chain release factor 3 of Pseudomonas entomophila (strain L48).